Reading from the N-terminus, the 697-residue chain is tRNA 5-methylaminomethyl-2-thiouridine biosynthesis bifunctional protein MnmC (697 aa).

The segment at 1–272 is tRNA (mnm(5)s(2)U34)-methyltransferase; the sequence is MPKPASMAMN…KREMLTAVMS (272 aa). An FAD-dependent cmnm(5)s(2)U34 oxidoreductase region spans residues 300 to 697; that stretch reads IGAGVAGLLT…HKHKTRQAVI (398 aa).

In the N-terminal section; belongs to the methyltransferase superfamily. tRNA (mnm(5)s(2)U34)-methyltransferase family. This sequence in the C-terminal section; belongs to the DAO family. Requires FAD as cofactor.

Its subcellular location is the cytoplasm. The catalysed reaction is 5-aminomethyl-2-thiouridine(34) in tRNA + S-adenosyl-L-methionine = 5-methylaminomethyl-2-thiouridine(34) in tRNA + S-adenosyl-L-homocysteine + H(+). Catalyzes the last two steps in the biosynthesis of 5-methylaminomethyl-2-thiouridine (mnm(5)s(2)U) at the wobble position (U34) in tRNA. Catalyzes the FAD-dependent demodification of cmnm(5)s(2)U34 to nm(5)s(2)U34, followed by the transfer of a methyl group from S-adenosyl-L-methionine to nm(5)s(2)U34, to form mnm(5)s(2)U34. In Psychrobacter cryohalolentis (strain ATCC BAA-1226 / DSM 17306 / VKM B-2378 / K5), this protein is tRNA 5-methylaminomethyl-2-thiouridine biosynthesis bifunctional protein MnmC.